A 129-amino-acid polypeptide reads, in one-letter code: Small ribosomal subunit protein uS11 (129 aa).

It belongs to the universal ribosomal protein uS11 family. Part of the 30S ribosomal subunit. Interacts with proteins S7 and S18. Binds to IF-3.

Its function is as follows. Located on the platform of the 30S subunit, it bridges several disparate RNA helices of the 16S rRNA. Forms part of the Shine-Dalgarno cleft in the 70S ribosome. The polypeptide is Small ribosomal subunit protein uS11 (Paracoccus denitrificans (strain Pd 1222)).